The following is a 346-amino-acid chain: Probable dual-specificity RNA methyltransferase RlmN (346 aa).

The Proton acceptor role is filled by Glu-76. Positions 97 to 329 (SYDRATICVS…TFIRKPRGRD (233 aa)) constitute a Radical SAM core domain. A disulfide bond links Cys-104 and Cys-334. Residues Cys-111, Cys-115, and Cys-118 each contribute to the [4Fe-4S] cluster site. S-adenosyl-L-methionine-binding positions include 162 to 163 (GE), Ser-192, 215 to 217 (SLN), and Asn-291. Residue Cys-334 is the S-methylcysteine intermediate of the active site.

It belongs to the radical SAM superfamily. RlmN family. Requires [4Fe-4S] cluster as cofactor.

The protein localises to the cytoplasm. The enzyme catalyses adenosine(2503) in 23S rRNA + 2 reduced [2Fe-2S]-[ferredoxin] + 2 S-adenosyl-L-methionine = 2-methyladenosine(2503) in 23S rRNA + 5'-deoxyadenosine + L-methionine + 2 oxidized [2Fe-2S]-[ferredoxin] + S-adenosyl-L-homocysteine. It carries out the reaction adenosine(37) in tRNA + 2 reduced [2Fe-2S]-[ferredoxin] + 2 S-adenosyl-L-methionine = 2-methyladenosine(37) in tRNA + 5'-deoxyadenosine + L-methionine + 2 oxidized [2Fe-2S]-[ferredoxin] + S-adenosyl-L-homocysteine. Functionally, specifically methylates position 2 of adenine 2503 in 23S rRNA and position 2 of adenine 37 in tRNAs. In Koribacter versatilis (strain Ellin345), this protein is Probable dual-specificity RNA methyltransferase RlmN.